The primary structure comprises 244 residues: uncharacterized protein (244 aa).

Residues 1 to 18 (MQFSVLCKFLLLVTAVMA) form the signal peptide. At 19–223 (QTEYTPGFTT…TTIPSSAVHY (205 aa)) the chain is on the lumenal side. Low complexity-rich tracts occupy residues 55 to 65 (ETSTHSVTSTN) and 75 to 128 (TSHN…TTHV). A disordered region spans residues 55-128 (ETSTHSVTST…TTVVPPTTHV (74 aa)). The chain crosses the membrane as a helical span at residues 224-244 (ASPSGLLALVVMLISAFAFLA).

It localises to the endoplasmic reticulum membrane. This is an uncharacterized protein from Schizosaccharomyces pombe (strain 972 / ATCC 24843) (Fission yeast).